The following is a 228-amino-acid chain: U1 small nuclear ribonucleoprotein C-2 (228 aa).

The segment at 4–36 (YYCDYCDTYLTHDSPSVRKQHNAGYKHKANVRT) adopts a Matrin-type zinc-finger fold. A disordered region spans residues 105–228 (PGVRPPILPA…SYALPSEGNH (124 aa)). Pro residues-rich tracts occupy residues 107–156 (VRPP…PPGS) and 164–175 (LPRPPTLPPPTS). A compositionally biased stretch (low complexity) spans 178–190 (PGAPIPNSAAPPA). Residues 196-214 (PPAPAGPTSGAPPAPPTAP) are compositionally biased toward pro residues.

This sequence belongs to the U1 small nuclear ribonucleoprotein C family. U1 snRNP is composed of the 7 core Sm proteins B/B', D1, D2, D3, E, F and G that assemble in a heptameric protein ring on the Sm site of the small nuclear RNA to form the core snRNP, and at least 3 U1 snRNP-specific proteins U1-70K, U1-A and U1-C. U1-C interacts with U1 snRNA and the 5' splice-site region of the pre-mRNA.

The protein localises to the nucleus. Component of the spliceosomal U1 snRNP, which is essential for recognition of the pre-mRNA 5' splice-site and the subsequent assembly of the spliceosome. U1-C is directly involved in initial 5' splice-site recognition for both constitutive and regulated alternative splicing. The interaction with the 5' splice-site seems to precede base-pairing between the pre-mRNA and the U1 snRNA. Stimulates commitment or early (E) complex formation by stabilizing the base pairing of the 5' end of the U1 snRNA and the 5' splice-site region. In Sorghum bicolor (Sorghum), this protein is U1 small nuclear ribonucleoprotein C-2.